Here is a 100-residue protein sequence, read N- to C-terminus: Small ribosomal subunit protein uS14 (100 aa).

Belongs to the universal ribosomal protein uS14 family. Part of the 30S ribosomal subunit. Contacts proteins S3 and S10.

Binds 16S rRNA, required for the assembly of 30S particles and may also be responsible for determining the conformation of the 16S rRNA at the A site. This is Small ribosomal subunit protein uS14 from Trichormus variabilis (strain ATCC 29413 / PCC 7937) (Anabaena variabilis).